Here is a 15281-residue protein sequence, read N- to C-terminus: Cyclosporin synthetase simA (15281 aa).

The tract at residues 34–463 (SFAQGRLWFL…AVHVKTMPLT (430 aa)) is condensation 1. The adenylation 1 stretch occupies residues 513–918 (SYSELDHKSD…NSDQVRDAAV (406 aa)). The Carrier 1 domain occupies 1026 to 1100 (APRNEIEAVL…DLAATIQRGS (75 aa)). Ser-1060 carries the post-translational modification O-(pantetheine 4'-phosphoryl)serine. The condensation 2 stretch occupies residues 1118–1549 (SFAQGRLWFL…QTPIMTMPLT (432 aa)). An adenylation 2 region spans residues 1599–2004 (SYAELDQRSD…SSAGVHDAVV (406 aa)). The tract at residues 2067–2251 (SWTSMYDGTL…LEELEEELLV (185 aa)) is methyltransferase (M) domain 1. The Carrier 2 domain maps to 2524–2598 (APRDSIEAII…DLAATIQQDT (75 aa)). Ser-2558 carries the post-translational modification O-(pantetheine 4'-phosphoryl)serine. Residues 2616–3044 (SFAQGRLWFL…EPDMPVASMA (429 aa)) form a condensation 3 region. Positions 3096-3498 (SYADLDRKSD…SHDLVTDAAV (403 aa)) are adenylation 3. The tract at residues 3562 to 3749 (SMYDGSLIKK…EDELLVDPAF (188 aa)) is methyltransferase (M) domain 2. A Carrier 3 domain is found at 4011-4085 (APRTEIERVL…DLVLIVQQGS (75 aa)). At Ser-4045 the chain carries O-(pantetheine 4'-phosphoryl)serine. The tract at residues 4100-4530 (VPQSFAQGRL…GPDVPISTLP (431 aa)) is condensation 4. Residues 4582-4986 (SYAQLDRESD…FLNDGFVEDV (405 aa)) form an adenylation 4 region. Residues 5052-5241 (TSMYDGTEID…ELLVDPAFFT (190 aa)) form a methyltransferase (M) domain 3 region. Residues 5503-5577 (PPRNSVEATV…DLAAVIQRNS (75 aa)) form the Carrier 4 domain. An O-(pantetheine 4'-phosphoryl)serine modification is found at Ser-5537. The condensation 5 stretch occupies residues 5592–6023 (VPQSFAQGRL…QPLTPLAVLP (432 aa)). The segment at 6075-6478 (TYAQLDQQSD…SHNSVQDAAV (404 aa)) is adenylation 5. Positions 6545–6729 (WTSMYDGSEI…ELEANEEELL (185 aa)) are methyltransferase (M) domain 4. Residues 7000 to 7074 (APRNEIEAIL…DLAASIQRES (75 aa)) form the Carrier 5 domain. Position 7034 is an O-(pantetheine 4'-phosphoryl)serine (Ser-7034). A condensation 6 region spans residues 7092 to 7517 (SFAQGRLWFL…VLDQPLTPIS (426 aa)). The tract at residues 7572 to 7976 (TYAQLDEQSD…DHKSVLAATV (405 aa)) is adenylation 6. The Carrier 6 domain occupies 8060–8134 (PPRDEVEAVL…DLADIIRRGS (75 aa)). Ser-8094 carries the post-translational modification O-(pantetheine 4'-phosphoryl)serine. Positions 8152-8582 (SFAQGRLWFL…PKQRLMAMPI (431 aa)) are condensation 7. An adenylation 7 region spans residues 8633 to 9038 (TYADLDGQSN…GHDLVHDAAV (406 aa)). The interval 9111 to 9288 (PVNEMKEWLD…EESEEELLVD (178 aa)) is methyltransferase (M) domain 5. Residues 9555 to 9629 (APRNDTEIVL…DLAASIEQGS (75 aa)) enclose the Carrier 7 domain. O-(pantetheine 4'-phosphoryl)serine is present on Ser-9589. The segment at 9647–10077 (SYAQGRLWFL…QVSISTMPLT (431 aa)) is condensation 8. The adenylation 8 stretch occupies residues 10127 to 10529 (SYTSLDQKSE…GNKAIHDAAV (403 aa)). Positions 10588–10768 (RDFTSWTSMY…DQIRQEVARL (181 aa)) are methyltransferase (M) domain 6. The region spanning 11052 to 11126 (APRNDIEAVL…DLADVVQTGS (75 aa)) is the Carrier 8 domain. At Ser-11086 the chain carries O-(pantetheine 4'-phosphoryl)serine. The tract at residues 11144–11567 (SFSQGRLWFL…HANLATLPLT (424 aa)) is condensation 9. The adenylation 9 stretch occupies residues 11616–12019 (TYTELDERSS…RDPAISDSAV (404 aa)). One can recognise a Carrier 9 domain in the interval 12124–12198 (APRNDIETII…QLAASIQQGS (75 aa)). Ser-12158 is subject to O-(pantetheine 4'-phosphoryl)serine. The tract at residues 12216–12645 (SFAQGRLWFL…IAISTMPLVD (430 aa)) is condensation 10. Positions 12696–13096 (TYAELDQQSD…SDSSINDAVV (401 aa)) are adenylation 10. The segment at 13162–13343 (YDGSLIPREE…EDDEEELLVD (182 aa)) is methyltransferase (M) domain 7. Residues 13620–13694 (APRTEIEVVL…DLAASILQGS (75 aa)) form the Carrier 10 domain. An O-(pantetheine 4'-phosphoryl)serine modification is found at Ser-13654. The tract at residues 13710 to 14143 (EQSFAQGRLW…PQSPIATMPL (434 aa)) is condensation 11. Positions 14194–14598 (TYAELDRLSD…SENSVTDAAV (405 aa)) are adenylation 11. Positions 14695 to 14769 (APRNETEAAI…SLAGKLEQQQ (75 aa)) constitute a Carrier 11 domain. Ser-14729 is modified (O-(pantetheine 4'-phosphoryl)serine). A condensation 12 region spans residues 14814–15158 (DMYPATQTQI…HPEAEIEGQQ (345 aa)). Positions 15169 to 15224 (QARQANGHAPNGTNGTNGTNGTNGANGTNGTNGTNGTHANGINGSNGVNGRDSNVV) are disordered. Residues 15173 to 15211 (ANGHAPNGTNGTNGTNGTNGANGTNGTNGTNGTHANGIN) are compositionally biased toward low complexity. Residues 15213–15224 (SNGVNGRDSNVV) show a composition bias toward polar residues.

It belongs to the NRP synthetase family. The cofactor is pantetheine 4'-phosphate.

Nonribosomal peptide synthetase; part of the gene cluster that mediates the biosynthesis of the cycloundecapeptide cyclosporin A (CsA), a compound with antifungal activity used as an immunosuppressant drug. Cyclosporin A contains three non-proteinogenic amino acids: D-alanine, alpha-amino butyric acid and the unusual amino acid (4R)-4-[(E)-2-butenyl]-4-methyl-l-threonine (Bmt). The nonribosomal peptide synthetase (NRPS) catalyzes the elongation and cyclization of the undecapeptide chain. SimA contains 11 modules responsible for sequential uptake of substrates and chain elongation. In addition to the core condensation-adenylation-thiolation (C-A-T) domains present in each module, seven modules contain an additional N-methylation (M) domain (modules 2, 3, 4, 5, 7, 8, and 10). The terminal C domain (C12 or Ct) is implicated in cyclization of the peptidyl chains to form CsA. The first module (A1) takes up D-Ala which is provided by the alanine racemase simB. The A2, A3, A8, and A10 domains have the same substrate-specific signature for recognition of leucine residues. The unusual amino acid (4R)-4-[(E)-2-butenyl]-4-methyl-l-threonine (Bmt) is recognized by the fifth module (A5). The A11 domain recognizes L-Ala. The PKS simG mediates the biosynthesis of 3R-hydroxyl-4R-methyl-6E-octenoic acid from acetyl coenzyme A (acetyl-CoA), malonyl-CoA, and S-adenosylmethionine, and 3R-hydroxyl-4R-methyl-6E-octenoic acid is then be repeatedly oxidized by simI to 3R-hydroxy-4R-methyl-2-keto-6E-octenoic acid. The latter is likely converted to Bmt through the action of the aminotransferase SimJ. The sequence is that of Cyclosporin synthetase simA from Tolypocladium inflatum (Cyclosporin fungus).